The following is a 284-amino-acid chain: 4-hydroxybenzoate octaprenyltransferase (284 aa).

7 consecutive transmembrane segments (helical) span residues 33-53 (VIAA…LGVF), 93-113 (IGLF…MNPL), 136-156 (HIPQ…AWAA), 159-179 (GELP…TIAY), 209-229 (LIIG…GQFY), 235-252 (YYWT…QQHL), and 264-284 (AFLN…VAFW).

It belongs to the UbiA prenyltransferase family. Mg(2+) serves as cofactor.

It is found in the cell inner membrane. It catalyses the reaction all-trans-octaprenyl diphosphate + 4-hydroxybenzoate = 4-hydroxy-3-(all-trans-octaprenyl)benzoate + diphosphate. It functions in the pathway cofactor biosynthesis; ubiquinone biosynthesis. Functionally, catalyzes the prenylation of para-hydroxybenzoate (PHB) with an all-trans polyprenyl group. Mediates the second step in the final reaction sequence of ubiquinone-8 (UQ-8) biosynthesis, which is the condensation of the polyisoprenoid side chain with PHB, generating the first membrane-bound Q intermediate 3-octaprenyl-4-hydroxybenzoate. The protein is 4-hydroxybenzoate octaprenyltransferase of Vibrio parahaemolyticus serotype O3:K6 (strain RIMD 2210633).